A 250-amino-acid polypeptide reads, in one-letter code: Urease accessory protein UreD (250 aa).

Belongs to the UreD family. UreD, UreF and UreG form a complex that acts as a GTP-hydrolysis-dependent molecular chaperone, activating the urease apoprotein by helping to assemble the nickel containing metallocenter of UreC. The UreE protein probably delivers the nickel.

Its subcellular location is the cytoplasm. Required for maturation of urease via the functional incorporation of the urease nickel metallocenter. This Aliarcobacter butzleri (strain RM4018) (Arcobacter butzleri) protein is Urease accessory protein UreD.